The sequence spans 141 residues: Hemoglobin subunit alpha-1 (141 aa).

In terms of domain architecture, Globin spans 1–141 (VLSGSDKNNV…VGNVLTAKYR (141 aa)). His58 lines the O2 pocket. His87 is a heme b binding site.

It belongs to the globin family. In terms of assembly, heterotetramer of two alpha chains and two beta chains. Red blood cells.

In terms of biological role, involved in oxygen transport from the lung to the various peripheral tissues. The sequence is that of Hemoglobin subunit alpha-1 from Stercorarius maccormicki (South polar skua).